The primary structure comprises 457 residues: Cysteine--tRNA ligase (457 aa).

Cys29 serves as a coordination point for Zn(2+). The short motif at 31-41 (PTVYDNPHIGN) is the 'HIGH' region element. Residues Cys214, His239, and Glu243 each contribute to the Zn(2+) site. A 'KMSKS' region motif is present at residues 272–276 (KMSKS). Lys275 contributes to the ATP binding site.

The protein belongs to the class-I aminoacyl-tRNA synthetase family. As to quaternary structure, monomer. Zn(2+) is required as a cofactor.

Its subcellular location is the cytoplasm. It carries out the reaction tRNA(Cys) + L-cysteine + ATP = L-cysteinyl-tRNA(Cys) + AMP + diphosphate. This is Cysteine--tRNA ligase (cysS) from Rickettsia prowazekii (strain Madrid E).